The primary structure comprises 157 residues: SsrA-binding protein (157 aa).

Residues 133–157 are disordered; sequence LHDKRESEKKRDWGREKGRLLRARG. Residues 135-151 are compositionally biased toward basic and acidic residues; that stretch reads DKRESEKKRDWGREKGR.

It belongs to the SmpB family.

The protein localises to the cytoplasm. Required for rescue of stalled ribosomes mediated by trans-translation. Binds to transfer-messenger RNA (tmRNA), required for stable association of tmRNA with ribosomes. tmRNA and SmpB together mimic tRNA shape, replacing the anticodon stem-loop with SmpB. tmRNA is encoded by the ssrA gene; the 2 termini fold to resemble tRNA(Ala) and it encodes a 'tag peptide', a short internal open reading frame. During trans-translation Ala-aminoacylated tmRNA acts like a tRNA, entering the A-site of stalled ribosomes, displacing the stalled mRNA. The ribosome then switches to translate the ORF on the tmRNA; the nascent peptide is terminated with the 'tag peptide' encoded by the tmRNA and targeted for degradation. The ribosome is freed to recommence translation, which seems to be the essential function of trans-translation. This Nitrobacter winogradskyi (strain ATCC 25391 / DSM 10237 / CIP 104748 / NCIMB 11846 / Nb-255) protein is SsrA-binding protein.